Consider the following 267-residue polypeptide: tRNA pseudouridine synthase A (267 aa).

Catalysis depends on aspartate 51, which acts as the Nucleophile. Tyrosine 109 is a substrate binding site.

Belongs to the tRNA pseudouridine synthase TruA family. Homodimer.

The catalysed reaction is uridine(38/39/40) in tRNA = pseudouridine(38/39/40) in tRNA. In terms of biological role, formation of pseudouridine at positions 38, 39 and 40 in the anticodon stem and loop of transfer RNAs. The chain is tRNA pseudouridine synthase A from Staphylococcus aureus (strain Mu3 / ATCC 700698).